Consider the following 478-residue polypeptide: Oxidative stress-induced growth inhibitor 1 (478 aa).

Residue Ser12 is modified to Phosphoserine.

The protein belongs to the OKL38 family. NADPH serves as cofactor.

It localises to the midbody. Monooxygenase catalytic activity. Involved in regulation of cytokinesis; promotes RHOA activity, probably acting locally at the midbody in late cytokinesis. Monooxygenase activity is involved in stabilizing transient structures between daughter cells, termed intercellular bridges, before abscission. Regulates differentiation and proliferation through the regulation of cell death. The chain is Oxidative stress-induced growth inhibitor 1 from Mus musculus (Mouse).